Here is a 382-residue protein sequence, read N- to C-terminus: Sulfate adenylyltransferase (382 aa).

It belongs to the sulfate adenylyltransferase family.

The enzyme catalyses sulfate + ATP + H(+) = adenosine 5'-phosphosulfate + diphosphate. It functions in the pathway sulfur metabolism; hydrogen sulfide biosynthesis; sulfite from sulfate: step 1/3. This is Sulfate adenylyltransferase from Staphylothermus marinus (strain ATCC 43588 / DSM 3639 / JCM 9404 / F1).